The primary structure comprises 213 residues: Superoxide dismutase [Fe] (213 aa).

Positions 28, 82, 164, and 168 each coordinate Fe cation.

Belongs to the iron/manganese superoxide dismutase family. Homotetramer. Requires Fe cation as cofactor.

It carries out the reaction 2 superoxide + 2 H(+) = H2O2 + O2. In terms of biological role, destroys superoxide anion radicals which are normally produced within the cells and which are toxic to biological systems. The sequence is that of Superoxide dismutase [Fe] (sodB) from Aquifex pyrophilus.